We begin with the raw amino-acid sequence, 76 residues long: ATP synthase subunit 9, mitochondrial (76 aa).

2 consecutive transmembrane segments (helical) span residues 10-30 (IGAGISTIGLLGAGIGIAIVF) and 52-72 (ILGFALSEATGLFCLMISFLL).

Belongs to the ATPase C chain family. In terms of assembly, F-type ATPases have 2 components, CF(1) - the catalytic core - and CF(0) - the membrane proton channel. CF(1) has five subunits: alpha(3), beta(3), gamma(1), delta(1), epsilon(1). CF(0) has three main subunits: a, b and c.

Its subcellular location is the mitochondrion membrane. Functionally, mitochondrial membrane ATP synthase (F(1)F(0) ATP synthase or Complex V) produces ATP from ADP in the presence of a proton gradient across the membrane which is generated by electron transport complexes of the respiratory chain. F-type ATPases consist of two structural domains, F(1) - containing the extramembraneous catalytic core and F(0) - containing the membrane proton channel, linked together by a central stalk and a peripheral stalk. During catalysis, ATP synthesis in the catalytic domain of F(1) is coupled via a rotary mechanism of the central stalk subunits to proton translocation. Part of the complex F(0) domain. A homomeric c-ring of probably 10 subunits is part of the complex rotary element. The protein is ATP synthase subunit 9, mitochondrial (ATP9) of Kluyveromyces lactis (strain ATCC 8585 / CBS 2359 / DSM 70799 / NBRC 1267 / NRRL Y-1140 / WM37) (Yeast).